A 361-amino-acid polypeptide reads, in one-letter code: Histidinol-phosphate aminotransferase (361 aa).

Lysine 219 is modified (N6-(pyridoxal phosphate)lysine).

This sequence belongs to the class-II pyridoxal-phosphate-dependent aminotransferase family. Histidinol-phosphate aminotransferase subfamily. Homodimer. It depends on pyridoxal 5'-phosphate as a cofactor.

It catalyses the reaction L-histidinol phosphate + 2-oxoglutarate = 3-(imidazol-4-yl)-2-oxopropyl phosphate + L-glutamate. It participates in amino-acid biosynthesis; L-histidine biosynthesis; L-histidine from 5-phospho-alpha-D-ribose 1-diphosphate: step 7/9. The polypeptide is Histidinol-phosphate aminotransferase (Acinetobacter baumannii (strain ACICU)).